The primary structure comprises 37 residues: Glucagon-1 (37 aa).

It belongs to the glucagon family.

The protein localises to the secreted. Glucagon plays a key role in glucose metabolism and homeostasis. Regulates blood glucose by increasing gluconeogenesis and decreasing glycolysis. The sequence is that of Glucagon-1 from Huso dauricus (Kaluga sturgeon).